The sequence spans 171 residues: Probable deoxyuridine 5'-triphosphate nucleotidohydrolase (171 aa).

The protein belongs to the dCTP deaminase family. Archaeal dUTPase subfamily.

It carries out the reaction dUTP + H2O = dUMP + diphosphate + H(+). The protein operates within pyrimidine metabolism; dUMP biosynthesis; dUMP from dCTP (dUTP route): step 2/2. Its function is as follows. This enzyme is involved in nucleotide metabolism: it produces dUMP, the immediate precursor of thymidine nucleotides and it decreases the intracellular concentration of dUTP so that uracil cannot be incorporated into DNA. In Methanosarcina barkeri (strain Fusaro / DSM 804), this protein is Probable deoxyuridine 5'-triphosphate nucleotidohydrolase.